Consider the following 650-residue polypeptide: Chaperone protein DnaK (650 aa).

Thr200 is modified (phosphothreonine; by autocatalysis). Residues 614–635 (AGAAGAAGAAEGAAHAGGAQQA) form a disordered region.

This sequence belongs to the heat shock protein 70 family.

Its function is as follows. Acts as a chaperone. This chain is Chaperone protein DnaK, found in Burkholderia lata (strain ATCC 17760 / DSM 23089 / LMG 22485 / NCIMB 9086 / R18194 / 383).